The primary structure comprises 347 residues: F-box/LRR-repeat/kelch-repeat protein At2g27520 (347 aa).

An F-box domain is found at 1–50 (MVRLDLPWDLVDEILSRLPATSLGRLRFTCKRWNALFKDPEFITKQFHKA). LRR repeat units follow at residues 59–82 (LSNFGVYSMSTNLKEIPNNIEIAQ), 152–177 (CKLVEIFELKSNSWRVLSKVHPNVEK), 196–220 (KFNILSFDFTTETFRSVPLPFLYQD), and 261–285 (LSWSKSFTLEFDSLRDLPVMSILRI). A Kelch 1 repeat occupies 138-187 (KSYDSYKILRITYGCKLVEIFELKSNSWRVLSKVHPNVEKHYYGGVSFKG). One copy of the Kelch 2 repeat lies at 306 to 347 (MIYIVGKNGFKKLSYEKDRSNLWRLPFFFSYVPSLVGLYPPM).

In Arabidopsis thaliana (Mouse-ear cress), this protein is F-box/LRR-repeat/kelch-repeat protein At2g27520.